The chain runs to 652 residues: Acetyl-coenzyme A synthetase (652 aa).

Residues 191–194 (RAGN) and Thr-311 each bind CoA. ATP is bound by residues 387 to 389 (GEP), 411 to 416 (DTWWQT), Asp-503, and Arg-518. Ser-526 is a CoA binding site. Position 529 (Arg-529) interacts with ATP. Residues Val-540, His-542, and Val-545 each contribute to the Mg(2+) site. Residue Arg-587 coordinates CoA. Lys-613 is subject to N6-acetyllysine.

It belongs to the ATP-dependent AMP-binding enzyme family. Requires Mg(2+) as cofactor. Acetylated. Deacetylation by the SIR2-homolog deacetylase activates the enzyme.

It carries out the reaction acetate + ATP + CoA = acetyl-CoA + AMP + diphosphate. Catalyzes the conversion of acetate into acetyl-CoA (AcCoA), an essential intermediate at the junction of anabolic and catabolic pathways. AcsA undergoes a two-step reaction. In the first half reaction, AcsA combines acetate with ATP to form acetyl-adenylate (AcAMP) intermediate. In the second half reaction, it can then transfer the acetyl group from AcAMP to the sulfhydryl group of CoA, forming the product AcCoA. This chain is Acetyl-coenzyme A synthetase, found in Marinomonas sp. (strain MWYL1).